Reading from the N-terminus, the 131-residue chain is uncharacterized protein (131 aa).

This is an uncharacterized protein from Homo sapiens (Human).